Reading from the N-terminus, the 36-residue chain is Pancreatic polypeptide (36 aa).

Tyrosine 36 is modified (tyrosine amide).

It belongs to the NPY family.

It localises to the secreted. Its function is as follows. Hormone secreted by pancreatic cells that acts as a regulator of pancreatic and gastrointestinal functions probably by signaling through the G protein-coupled receptor NPY4R2. The sequence is that of Pancreatic polypeptide (PPY) from Oryctolagus cuniculus (Rabbit).